The following is a 274-amino-acid chain: uncharacterized protein (274 aa).

The signal sequence occupies residues 1 to 30 (MTIDTPAREDQTLAATHRAMWALGDYALMA).

It to M.tuberculosis Rv1403c.

This is an uncharacterized protein from Mycobacterium bovis (strain ATCC BAA-935 / AF2122/97).